A 1822-amino-acid polypeptide reads, in one-letter code: Sperm flagellar protein 2 (1822 aa).

Residues 1 to 105 (MSEILCQWLN…LLYQLYIALQ (105 aa)) form the Calponin-homology (CH) domain. Coiled coils occupy residues 227–260 (KALE…KDLQ), 321–396 (AHEA…KQAK), 732–758 (NQAQ…KAQK), and 871–909 (CEKV…LAEL). 4 disordered regions span residues 896–1004 (KEAE…VPQP), 1278–1327 (EEEK…EATP), 1664–1718 (SIPS…NNEK), and 1803–1822 (EHVQ…EEKK). The span at 911-920 (LPTPPPAPPP) shows a compositional bias: pro residues. 2 stretches are compositionally biased toward basic and acidic residues: residues 921–930 (EPEKEKEIHQ) and 949–968 (PHGK…ETAL). A compositionally biased stretch (low complexity) spans 975–987 (KGKSSGGKVPVKK). Composition is skewed to basic and acidic residues over residues 1278–1292 (EEEK…KEKS) and 1303–1314 (KEPPKKKQEDKK). Residues 1324-1676 (EATPVIVTTE…SAEKTSSTDA (353 aa)) are interaction with IFT20. Positions 1686 to 1712 (EENAAREERKLKDDTEKREQKDEEIPE) form a coiled coil. Positions 1688-1708 (NAAREERKLKDDTEKREQKDE) are enriched in basic and acidic residues.

As to quaternary structure, interacts (via C-terminus) with IFT20. Interacts with DYNC1I2.

It is found in the cell projection. The protein localises to the cilium. The protein resides in the flagellum. Its subcellular location is the cytoplasm. It localises to the golgi apparatus. Functionally, required for correct axoneme development in spermatozoa. Important for normal development of the manchette and sperm head morphology. Essential for male fertility. Plays a role in localization of the intraflagellar transport protein IFT20 to the manchette, suggesting function as an adapter for dynein-mediated protein transport during spermatogenesis. Also plays a role in bone growth where it seems to be required for normal osteoblast differentiation. The chain is Sperm flagellar protein 2 (SPEF2) from Homo sapiens (Human).